Reading from the N-terminus, the 315-residue chain is Bifunctional protein FolD (315 aa).

NADP(+)-binding positions include 166 to 168 (GRS), Ser-193, and Ile-234.

Belongs to the tetrahydrofolate dehydrogenase/cyclohydrolase family. In terms of assembly, homodimer.

It carries out the reaction (6R)-5,10-methylene-5,6,7,8-tetrahydrofolate + NADP(+) = (6R)-5,10-methenyltetrahydrofolate + NADPH. The enzyme catalyses (6R)-5,10-methenyltetrahydrofolate + H2O = (6R)-10-formyltetrahydrofolate + H(+). Its pathway is one-carbon metabolism; tetrahydrofolate interconversion. Catalyzes the oxidation of 5,10-methylenetetrahydrofolate to 5,10-methenyltetrahydrofolate and then the hydrolysis of 5,10-methenyltetrahydrofolate to 10-formyltetrahydrofolate. This chain is Bifunctional protein FolD, found in Treponema pallidum (strain Nichols).